Reading from the N-terminus, the 491-residue chain is MKRMVSWSFHKLKTMKHLLLLLLCVFLVKSQGVNDNEEGFFSARGHRPLDKKREEAPSLRPAPPPISGGGYRARPAKAAATQKKVERKAPDAGGCLHADPDLGVLCPTGCQLQEALLQQERPIRNSVDELNNNVEAVSQTSSSSFQYMYLLKDLWQKRQKQVKDNENVVNEYSSELEKHQLYIDETVNSNIPTNLRVLRSILENLRSKIQKLESDVSAQMEYCRTPCTVSCNIPVVSGKECEEIIRKGGETSEMYLIQPDSSVKPYRVYCDMNTENGGWTVIQNRQDGSVDFGRKWDPYKQGFGNVATNTDGKNYCGLPGEYWLGNDKISQLTRMGPTELLIEMEDWKGDKVKAHYGGFTVQNEANKYQISVNKYRGTAGNALMDGASQLMGENRTMTIHNGMFFSTYDRDNDGWLTSDPRKQCSKEDGGGWWYNRCHAANPNGRYYWGGQYTWDMAKHGTDDGVVWMNWKGSWYSMRKMSMKIRPFFPQQ.

The N-terminal stretch at 1-30 (MKRMVSWSFHKLKTMKHLLLLLLCVFLVKS) is a signal peptide. Gln-31 bears the Pyrrolidone carboxylic acid mark. The tract at residues 44-75 (RGHRPLDKKREEAPSLRPAPPPISGGGYRARP) is disordered. Positions 45 to 47 (GHR) are beta-chain polymerization, binding distal domain of another fibrin. Over residues 47–57 (RPLDKKREEAP) the composition is skewed to basic and acidic residues. Residues 157 to 222 (KRQKQVKDNE…ESDVSAQMEY (66 aa)) are a coiled coil. 2 disulfides stabilise this stretch: Cys-231/Cys-316 and Cys-241/Cys-270. In terms of domain architecture, Fibrinogen C-terminal spans 232–488 (NIPVVSGKEC…KMSMKIRPFF (257 aa)). The N-linked (GlcNAc...) asparagine glycan is linked to Asn-394. Cysteines 424 and 437 form a disulfide.

Heterohexamer; disulfide linked. Contains 2 sets of 3 non-identical chains (alpha, beta and gamma). The 2 heterotrimers are in head to head conformation with the N-termini in a small central domain. Post-translationally, conversion of fibrinogen to fibrin is triggered by thrombin, which cleaves fibrinopeptides A and B from alpha and beta chains, and thus exposes the N-terminal polymerization sites responsible for the formation of the soft clot. The soft clot is converted into the hard clot by factor XIIIA which catalyzes the epsilon-(gamma-glutamyl)lysine cross-linking between gamma chains (stronger) and between alpha chains (weaker) of different monomers. As to expression, detected in blood plasma (at protein level).

The protein localises to the secreted. Functionally, cleaved by the protease thrombin to yield monomers which, together with fibrinogen alpha (FGA) and fibrinogen gamma (FGG), polymerize to form an insoluble fibrin matrix. Fibrin has a major function in hemostasis as one of the primary components of blood clots. In addition, functions during the early stages of wound repair to stabilize the lesion and guide cell migration during re-epithelialization. Was originally thought to be essential for platelet aggregation, based on in vitro studies using anticoagulated blood. However subsequent studies have shown that it is not absolutely required for thrombus formation in vivo. Enhances expression of SELP in activated platelets. Maternal fibrinogen is essential for successful pregnancy. Fibrin deposition is also associated with infection, where it protects against IFNG-mediated hemorrhage. May also facilitate the antibacterial immune response via both innate and T-cell mediated pathways. The sequence is that of Fibrinogen beta chain (FGB) from Homo sapiens (Human).